Reading from the N-terminus, the 533-residue chain is Peptide chain release factor 3 (533 aa).

The 269-residue stretch at 10 to 278 (EKRRTFAIIS…TFVEIAPPPQ (269 aa)) folds into the tr-type G domain. Residues 19–26 (SHPDAGKT), 87–91 (DTPGH), and 141–144 (NKMD) contribute to the GTP site.

It belongs to the TRAFAC class translation factor GTPase superfamily. Classic translation factor GTPase family. PrfC subfamily.

Its subcellular location is the cytoplasm. Increases the formation of ribosomal termination complexes and stimulates activities of RF-1 and RF-2. It binds guanine nucleotides and has strong preference for UGA stop codons. It may interact directly with the ribosome. The stimulation of RF-1 and RF-2 is significantly reduced by GTP and GDP, but not by GMP. This chain is Peptide chain release factor 3, found in Salinibacter ruber (strain DSM 13855 / M31).